Reading from the N-terminus, the 730-residue chain is Ribosomal RNA large subunit methyltransferase K/L (730 aa).

The THUMP domain maps to 46–157 (TAYRLCLWSR…RGEAILSLDL (112 aa)). Over residues 399 to 408 (AAVEEGEPRR) the composition is skewed to basic and acidic residues. Residues 399–418 (AAVEEGEPRRQAPVASEPAR) form a disordered region.

The protein belongs to the methyltransferase superfamily. RlmKL family.

It is found in the cytoplasm. It catalyses the reaction guanosine(2445) in 23S rRNA + S-adenosyl-L-methionine = N(2)-methylguanosine(2445) in 23S rRNA + S-adenosyl-L-homocysteine + H(+). The enzyme catalyses guanosine(2069) in 23S rRNA + S-adenosyl-L-methionine = N(2)-methylguanosine(2069) in 23S rRNA + S-adenosyl-L-homocysteine + H(+). In terms of biological role, specifically methylates the guanine in position 2445 (m2G2445) and the guanine in position 2069 (m7G2069) of 23S rRNA. The chain is Ribosomal RNA large subunit methyltransferase K/L from Pseudomonas entomophila (strain L48).